The chain runs to 405 residues: Tyrosine--tRNA ligase (405 aa).

The 'HIGH' region motif lies at 41-50; that stretch reads PTAPDLHLGH. The short motif at 225–229 is the 'KMSKS' region element; sequence KMSKS. ATP is bound at residue K228. The region spanning 342–404 is the S4 RNA-binding domain; it reads EPLLVWVLSK…GKKGKFLKII (63 aa).

This sequence belongs to the class-I aminoacyl-tRNA synthetase family. TyrS type 2 subfamily. In terms of assembly, homodimer.

Its subcellular location is the cytoplasm. The catalysed reaction is tRNA(Tyr) + L-tyrosine + ATP = L-tyrosyl-tRNA(Tyr) + AMP + diphosphate + H(+). Functionally, catalyzes the attachment of tyrosine to tRNA(Tyr) in a two-step reaction: tyrosine is first activated by ATP to form Tyr-AMP and then transferred to the acceptor end of tRNA(Tyr). This is Tyrosine--tRNA ligase from Leptospira interrogans serogroup Icterohaemorrhagiae serovar Lai (strain 56601).